The sequence spans 356 residues: Glutamine synthetase nodule isozyme (356 aa).

The 81-residue stretch at I19–G99 folds into the GS beta-grasp domain. The segment at P41–E66 is disordered. Residues K106 to P356 form the GS catalytic domain.

It belongs to the glutamine synthetase family. As to quaternary structure, homooctamer.

It localises to the cytoplasm. It catalyses the reaction L-glutamate + NH4(+) + ATP = L-glutamine + ADP + phosphate + H(+). This chain is Glutamine synthetase nodule isozyme, found in Vigna aconitifolia (Moth bean).